A 322-amino-acid chain; its full sequence is Basic 30 kDa endochitinase (322 aa).

The N-terminal stretch at 1–22 (MRLSEFTTLFLLFSVLLLSASA) is a signal peptide. The region spanning 23-64 (EQCGSQAGGALCASGLCCSKFGWCGNTNEYCGPGNCQSQCPG) is the Chitin-binding type-1 domain. Intrachain disulfides connect Cys-25-Cys-40, Cys-34-Cys-46, Cys-39-Cys-53, and Cys-58-Cys-62. 4-hydroxyproline is present on residues Pro-66 and Pro-68. Intrachain disulfides connect Cys-93/Cys-156, Cys-168/Cys-176, and Cys-275/Cys-307. Glu-138 (proton donor) is an active-site residue. A propeptide spans 316–322 (GLLVDIM) (removed in mature form).

This sequence belongs to the glycosyl hydrolase 19 family. Chitinase class I subfamily. The 4-hydroxyproline residues are not glycosylated in this plant vacuolar protein.

The protein resides in the vacuole. Its subcellular location is the secreted. It localises to the cell wall. The catalysed reaction is Random endo-hydrolysis of N-acetyl-beta-D-glucosaminide (1-&gt;4)-beta-linkages in chitin and chitodextrins.. In terms of biological role, defense against chitin-containing fungal pathogens. This Solanum lycopersicum (Tomato) protein is Basic 30 kDa endochitinase (CHI9).